The chain runs to 133 residues: uncharacterized protein (133 aa).

The protein to E.coli ydcQ.

This is an uncharacterized protein from Haemophilus phage HP1 (strain HP1c1) (Bacteriophage HP1).